The chain runs to 415 residues: MNFIEDLKWRGALNQITDEAGLLEAMASGKVGAYVGTDPTADSLHLGHLIPFMVLKRFQKAGGKAVIIIGGATGAIGDPRPTTERQLLSSEQLAENEKGITAQVTKLFGDNDTRIVNNNDWLGQLTLTDFLRDYGKLFSINVMLKKDVVASRLETGISFTEFTYQVLQGIDFHELWRREDVKLQIGGSDQWGNITSGIDLIHSLEGNEAKAFGLTIPLMTDSTGKKFGKSEGNAIWLDPKKTSPYTFYQFWLNQGDADVVKYLKYFTFLGSEEIDDLAEAVATNPGERLAQRRLAQEVTKFVHGESAVKEAEDLSTALFSGNVATLSAAQIADAFGGVPSFEAANTVKNIVDFLVDGGVEASKRQAREDVANGAISINGEKVTDVAAEINPLSHYDGQFVLVRRGKKKYFLGKIK.

Position 34 (Y34) interacts with L-tyrosine. A 'HIGH' region motif is present at residues 39–48 (PTADSLHLGH). 2 residues coordinate L-tyrosine: Y164 and Q168. Positions 226–230 (KFGKS) match the 'KMSKS' region motif. K229 is an ATP binding site. The 68-residue stretch at 348-415 (KNIVDFLVDG…KKKYFLGKIK (68 aa)) folds into the S4 RNA-binding domain.

This sequence belongs to the class-I aminoacyl-tRNA synthetase family. TyrS type 1 subfamily. Homodimer.

It is found in the cytoplasm. The enzyme catalyses tRNA(Tyr) + L-tyrosine + ATP = L-tyrosyl-tRNA(Tyr) + AMP + diphosphate + H(+). In terms of biological role, catalyzes the attachment of tyrosine to tRNA(Tyr) in a two-step reaction: tyrosine is first activated by ATP to form Tyr-AMP and then transferred to the acceptor end of tRNA(Tyr). The chain is Tyrosine--tRNA ligase from Leuconostoc citreum (strain KM20).